The following is a 113-amino-acid chain: Iron-sulfur cluster insertion protein ErpA (113 aa).

The iron-sulfur cluster site is built by C41, C105, and C107.

The protein belongs to the HesB/IscA family. Homodimer. Requires iron-sulfur cluster as cofactor.

In terms of biological role, required for insertion of 4Fe-4S clusters for at least IspG. The sequence is that of Iron-sulfur cluster insertion protein ErpA from Photobacterium profundum (strain SS9).